Consider the following 256-residue polypeptide: Pimeloyl-[acyl-carrier protein] methyl ester esterase (256 aa).

The AB hydrolase-1 domain occupies 15 to 242 (HLVLLHGWGL…AAHAPFISHP (228 aa)). Substrate contacts are provided by residues tryptophan 22, 82-83 (SL), and 143-147 (FLALQ). Catalysis depends on serine 82, which acts as the Nucleophile. Active-site residues include aspartate 207 and histidine 235. Substrate is bound at residue histidine 235.

The protein belongs to the AB hydrolase superfamily. Carboxylesterase BioH family. In terms of assembly, monomer.

The protein localises to the cytoplasm. It carries out the reaction 6-carboxyhexanoyl-[ACP] methyl ester + H2O = 6-carboxyhexanoyl-[ACP] + methanol + H(+). Its pathway is cofactor biosynthesis; biotin biosynthesis. The physiological role of BioH is to remove the methyl group introduced by BioC when the pimeloyl moiety is complete. It allows to synthesize pimeloyl-ACP via the fatty acid synthetic pathway through the hydrolysis of the ester bonds of pimeloyl-ACP esters. This Salmonella agona (strain SL483) protein is Pimeloyl-[acyl-carrier protein] methyl ester esterase.